Consider the following 246-residue polypeptide: 1-(5-phosphoribosyl)-5-[(5-phosphoribosylamino)methylideneamino] imidazole-4-carboxamide isomerase (246 aa).

Aspartate 8 acts as the Proton acceptor in catalysis. Catalysis depends on aspartate 131, which acts as the Proton donor.

The protein belongs to the HisA/HisF family.

Its subcellular location is the cytoplasm. It catalyses the reaction 1-(5-phospho-beta-D-ribosyl)-5-[(5-phospho-beta-D-ribosylamino)methylideneamino]imidazole-4-carboxamide = 5-[(5-phospho-1-deoxy-D-ribulos-1-ylimino)methylamino]-1-(5-phospho-beta-D-ribosyl)imidazole-4-carboxamide. Its pathway is amino-acid biosynthesis; L-histidine biosynthesis; L-histidine from 5-phospho-alpha-D-ribose 1-diphosphate: step 4/9. The sequence is that of 1-(5-phosphoribosyl)-5-[(5-phosphoribosylamino)methylideneamino] imidazole-4-carboxamide isomerase from Bordetella avium (strain 197N).